A 149-amino-acid chain; its full sequence is Large ribosomal subunit protein uL15 (149 aa).

Positions 1-61 (MELNSLRPAL…GGQMPLQRRL (61 aa)) are disordered. Basic residues predominate over residues 30 to 39 (TATKGHKGQK).

The protein belongs to the universal ribosomal protein uL15 family. Part of the 50S ribosomal subunit.

Its function is as follows. Binds to the 23S rRNA. This is Large ribosomal subunit protein uL15 from Trichlorobacter lovleyi (strain ATCC BAA-1151 / DSM 17278 / SZ) (Geobacter lovleyi).